Reading from the N-terminus, the 156-residue chain is Small ribosomal subunit protein uS7 (156 aa).

The protein belongs to the universal ribosomal protein uS7 family. Part of the 30S ribosomal subunit. Contacts proteins S9 and S11.

Its function is as follows. One of the primary rRNA binding proteins, it binds directly to 16S rRNA where it nucleates assembly of the head domain of the 30S subunit. Is located at the subunit interface close to the decoding center, probably blocks exit of the E-site tRNA. The protein is Small ribosomal subunit protein uS7 of Thermosynechococcus vestitus (strain NIES-2133 / IAM M-273 / BP-1).